The sequence spans 170 residues: S-ribosylhomocysteine lyase (170 aa).

Residues H54, H58, and C128 each contribute to the Fe cation site.

This sequence belongs to the LuxS family. In terms of assembly, homodimer. Fe cation serves as cofactor.

The enzyme catalyses S-(5-deoxy-D-ribos-5-yl)-L-homocysteine = (S)-4,5-dihydroxypentane-2,3-dione + L-homocysteine. Its function is as follows. Involved in the synthesis of autoinducer 2 (AI-2) which is secreted by bacteria and is used to communicate both the cell density and the metabolic potential of the environment. The regulation of gene expression in response to changes in cell density is called quorum sensing. Catalyzes the transformation of S-ribosylhomocysteine (RHC) to homocysteine (HC) and 4,5-dihydroxy-2,3-pentadione (DPD). This chain is S-ribosylhomocysteine lyase, found in Marinomonas sp. (strain MWYL1).